Consider the following 266-residue polypeptide: Hydroxyethylthiazole kinase (266 aa).

M45 is a binding site for substrate. ATP-binding residues include K121 and S167. G194 is a substrate binding site.

This sequence belongs to the Thz kinase family. Mg(2+) serves as cofactor.

The enzyme catalyses 5-(2-hydroxyethyl)-4-methylthiazole + ATP = 4-methyl-5-(2-phosphooxyethyl)-thiazole + ADP + H(+). Its pathway is cofactor biosynthesis; thiamine diphosphate biosynthesis; 4-methyl-5-(2-phosphoethyl)-thiazole from 5-(2-hydroxyethyl)-4-methylthiazole: step 1/1. Its function is as follows. Catalyzes the phosphorylation of the hydroxyl group of 4-methyl-5-beta-hydroxyethylthiazole (THZ). The sequence is that of Hydroxyethylthiazole kinase from Methanocella arvoryzae (strain DSM 22066 / NBRC 105507 / MRE50).